A 313-amino-acid polypeptide reads, in one-letter code: Homoserine kinase (313 aa).

Proline 92–alanine 102 contacts ATP.

It belongs to the GHMP kinase family. Homoserine kinase subfamily.

The protein resides in the cytoplasm. The enzyme catalyses L-homoserine + ATP = O-phospho-L-homoserine + ADP + H(+). It functions in the pathway amino-acid biosynthesis; L-threonine biosynthesis; L-threonine from L-aspartate: step 4/5. Catalyzes the ATP-dependent phosphorylation of L-homoserine to L-homoserine phosphate. This Aeropyrum pernix (strain ATCC 700893 / DSM 11879 / JCM 9820 / NBRC 100138 / K1) protein is Homoserine kinase.